We begin with the raw amino-acid sequence, 145 residues long: Polytheonamide B (145 aa).

Residues 1–96 (MADSDNTPTS…DDDLDQAAGG (96 aa)) constitute a propeptide that is removed on maturation. Thr-97 is subject to 2-oxo-5,5-dimethylhexanoate. Ile-99 bears the 3-methylisoleucine mark. Val-101 carries the 3-methylvaline modification. Val-102 carries the 3-methyl-D-valine modification. Val-103 is subject to 3-methylvaline. D-alanine (Ala) is present on Ala-104. 3-methylvaline is present on Val-105. 2 positions are modified to 3-methyl-D-valine: Val-106 and Val-110. Residue Asn-112 is modified to N4-methyl-D-asparagine. At Thr-113 the chain carries 3-hydroxyvaline (Thr). Val-117 is subject to 3-methylvaline. Asn-118 is modified (N4-methyl-D-asparagine). Gln-119 carries the (3S)-3-methylglutamine modification. Position 120 is a 3-hydroxy-D-valine (Val-120). Asn-124 is modified (N4-methyl-D-asparagine). The residue at position 126 (Asn-126) is a (3R)-N4-methyl-3-hydroxy-D-asparagine. Val-127 carries the 3-methylvaline modification. Val-128 is subject to 3-hydroxy-D-valine. 2 positions are modified to N4-methyl-D-asparagine: Asn-130 and Asn-132. At Asn-134 the chain carries (3R)-N4-methyl-3-hydroxy-D-asparagine. Asn-136 carries the post-translational modification N4-methyl-D-asparagine. A D-serine (Ser) modification is found at Ser-138. Residue Asn-140 is modified to D-asparagine. Residue Met-141 is modified to 3,3-dimethylmethionine. Asn-142 is subject to D-asparagine. Thr-144 bears the D-threonine mark.

In terms of processing, epimerization of most, and perhaps all, L- to D-amino acids is catalyzed by PoyD, when PoyA and PoyD are coexpressed in E.coli. Post-translationally, N-methylations are catalyzed by PoyE, when PoyA and PoyE are coexpressed in E.coli. To obtain 2-oxo-5,5-dimethylhexanoate, Thr-97 is firstly dehydrated by PoyF. The second step possibly corresponds to methylation by PoyB/C, and the third step may be a cleavage by PoyH/J.

Its function is as follows. Antimicrobial peptide active against Gram-positive bacteria (MIC=4-&gt;125 ug/ml). May act by forming transmembrane ion channels, since the peptide rapidly depolarizes the bacterial cytoplasmic membrane, simultaneously decreasing the membrane potential and intracellular potassium contents. In Bacterium symbiont subsp. Theonella swinhoei (strain pTSMAC1), this protein is Polytheonamide B.